The chain runs to 1323 residues: Glutamate receptor ionotropic, NMDA 2D (1323 aa).

The signal sequence occupies residues 1-27; that stretch reads MRGAGGPRGPRGPAKMLLLLALACASP. At 28-579 the chain is on the extracellular side; sequence FPEEVPGPGA…SPSAFLEPYS (552 aa). N89 carries N-linked (GlcNAc...) asparagine glycosylation. An intrachain disulfide couples C101 to C345. N349, N363, N381, and N464 each carry an N-linked (GlcNAc...) asparagine glycan. 2 disulfides stabilise this stretch: C452–C480 and C459–C481. Residues S536, T538, and R543 each coordinate L-glutamate. N566 carries an N-linked (GlcNAc...) asparagine glycan. Residues 580–601 form a helical membrane-spanning segment; the sequence is PAVWVMMFVMCLTVVAVTVFIF. Topologically, residues 602–626 are cytoplasmic; sequence EYLSPVGYNRSLATGKRPGGSTFTI. Positions 627-638 form an intramembrane region, discontinuously helical; it reads GKSIWLLWALVF. A pore-forming region spans residues 628 to 647; that stretch reads KSIWLLWALVFNNSVPVENP. Residues 639–650 are Cytoplasmic-facing; the sequence is NNSVPVENPRGT. The helical transmembrane segment at 651 to 671 threads the bilayer; that stretch reads TSKIMVLVWAFFAVIFLASYT. Over 672 to 840 the chain is Extracellular; it reads ANLAAFMIQE…EVMSSKLDID (169 aa). N712 is a glycosylation site (N-linked (GlcNAc...) asparagine). L-glutamate contacts are provided by S714, T715, and D756. The cysteines at positions 770 and 825 are disulfide-linked. Residues 841–864 traverse the membrane as a helical segment; that stretch reads NMAGVFYMLLVAMGLSLLVFAWEH. At 865 to 1323 the chain is on the cytoplasmic side; the sequence is LVYWRLRHCL…AHFSSLESEV (459 aa). 3 disordered regions span residues 897–952, 977–1112, and 1201–1323; these read EAAP…PGGA, AAPR…SLGG, and PWAA…ESEV. Over residues 899–929 the composition is skewed to pro residues; that stretch reads APPPAKPPPPPQPLPSPAYPAARPPPGPAPF. Residues 931-940 are compositionally biased toward basic and acidic residues; that stretch reads PRERAAADRW. Over residues 977 to 986 the composition is skewed to low complexity; it reads AAPRGAAGRP. Residues 987–1001 are compositionally biased toward pro residues; that stretch reads LSPPTTQPPQKPPPS. Positions 1030-1039 are enriched in low complexity; it reads AAAAAAVGPP. A compositionally biased stretch (pro residues) spans 1080–1092; it reads TAPPPRRAAPPPC. Basic residues predominate over residues 1208 to 1228; it reads PRRRARCGCPRPHPHRPRASH. R1303 carries the post-translational modification Omega-N-methylarginine. S1313 is subject to Phosphoserine. The PDZ-binding signature appears at 1321–1323; it reads SEV.

This sequence belongs to the glutamate-gated ion channel (TC 1.A.10.1) family. NR2D/GRIN2D subfamily. As to quaternary structure, heterotetramer. Forms heterotetrameric channels composed of two GluN1/zeta subunits (GRIN1), and two identical GluN2/epsilon subunits (GRIN2A, GRIN2B, GRIN2C or GRIN2D) or GluN3 subunits (GRIN3A or GRIN3B) (in vitro). In vivo, the subunit composition may depend on the expression levels of the different subunits. Interacts with PDZ domains of PATJ and DLG4. As to expression, detected in neonate brain synaptosomes (at protein level).

The protein localises to the cell membrane. It localises to the postsynaptic cell membrane. The catalysed reaction is Ca(2+)(in) = Ca(2+)(out). It carries out the reaction Na(+)(in) = Na(+)(out). It catalyses the reaction K(+)(in) = K(+)(out). Functionally, component of N-methyl-D-aspartate (NMDA) receptors (NMDARs) that function as heterotetrameric, ligand-gated cation channels with high calcium permeability and voltage-dependent block by Mg(2+). Participates in synaptic plasticity for learning and memory formation. Channel activation requires binding of the neurotransmitter L-glutamate to the GluN2 subunit, glycine or D-serine binding to the GluN1 subunit, plus membrane depolarization to eliminate channel inhibition by Mg(2+). NMDARs mediate simultaneously the potasium efflux and the influx of calcium and sodium. Each GluN2 subunit confers differential attributes to channel properties, including activation, deactivation and desensitization kinetics, pH sensitivity, Ca2(+) permeability, and binding to allosteric modulators. The sequence is that of Glutamate receptor ionotropic, NMDA 2D from Mus musculus (Mouse).